The chain runs to 459 residues: Glutamate--tRNA ligase 1 (459 aa).

Residues 8 to 18 carry the 'HIGH' region motif; sequence PSPTGYIHIGN. The short motif at 249–253 is the 'KMSKS' region element; the sequence is GLSKR. Lys252 is a binding site for ATP.

The protein belongs to the class-I aminoacyl-tRNA synthetase family. Glutamate--tRNA ligase type 1 subfamily. As to quaternary structure, monomer.

The protein resides in the cytoplasm. It carries out the reaction tRNA(Glu) + L-glutamate + ATP = L-glutamyl-tRNA(Glu) + AMP + diphosphate. Catalyzes the attachment of glutamate to tRNA(Glu) in a two-step reaction: glutamate is first activated by ATP to form Glu-AMP and then transferred to the acceptor end of tRNA(Glu). This chain is Glutamate--tRNA ligase 1, found in Bartonella quintana (strain Toulouse) (Rochalimaea quintana).